The following is a 334-amino-acid chain: Glycerol-3-phosphate dehydrogenase [NAD(P)+] (334 aa).

Tryptophan 13, arginine 33, and lysine 106 together coordinate NADPH. 3 residues coordinate sn-glycerol 3-phosphate: lysine 106, glycine 137, and serine 139. Residue alanine 141 participates in NADPH binding. Residues lysine 192, aspartate 245, serine 255, arginine 256, and asparagine 257 each coordinate sn-glycerol 3-phosphate. The Proton acceptor role is filled by lysine 192. NADPH is bound at residue arginine 256. Positions 280 and 282 each coordinate NADPH.

It belongs to the NAD-dependent glycerol-3-phosphate dehydrogenase family.

The protein resides in the cytoplasm. The catalysed reaction is sn-glycerol 3-phosphate + NAD(+) = dihydroxyacetone phosphate + NADH + H(+). It catalyses the reaction sn-glycerol 3-phosphate + NADP(+) = dihydroxyacetone phosphate + NADPH + H(+). Its pathway is membrane lipid metabolism; glycerophospholipid metabolism. Functionally, catalyzes the reduction of the glycolytic intermediate dihydroxyacetone phosphate (DHAP) to sn-glycerol 3-phosphate (G3P), the key precursor for phospholipid synthesis. The sequence is that of Glycerol-3-phosphate dehydrogenase [NAD(P)+] from Chlamydia pneumoniae (Chlamydophila pneumoniae).